Consider the following 219-residue polypeptide: Germin-like protein subfamily 2 member 3 (219 aa).

The signal sequence occupies residues 1–22 (MATSMIPIFVTFMLVAAHMALA). Cysteines 31 and 46 form a disulfide. The Cupin type-1 domain maps to 60 to 209 (IGLATAAATA…AFGAAAPEIQ (150 aa)). Residue Asn-70 is glycosylated (N-linked (GlcNAc...) asparagine). Mn(2+)-binding residues include His-109, His-111, Glu-116, and His-155.

The protein belongs to the germin family. In terms of assembly, oligomer (believed to be a pentamer but probably hexamer).

The protein resides in the secreted. The protein localises to the extracellular space. Its subcellular location is the apoplast. May play a role in plant defense. Probably has no oxalate oxidase activity even if the active site is conserved. The sequence is that of Germin-like protein subfamily 2 member 3 (GLP8) from Arabidopsis thaliana (Mouse-ear cress).